We begin with the raw amino-acid sequence, 208 residues long: Small ribosomal subunit protein uS4 (208 aa).

Residues 98-161 (RRLDNVIYRL…RKIPVIAEAQ (64 aa)) form the S4 RNA-binding domain.

This sequence belongs to the universal ribosomal protein uS4 family. Part of the 30S ribosomal subunit. Contacts protein S5. The interaction surface between S4 and S5 is involved in control of translational fidelity.

Functionally, one of the primary rRNA binding proteins, it binds directly to 16S rRNA where it nucleates assembly of the body of the 30S subunit. In terms of biological role, with S5 and S12 plays an important role in translational accuracy. This Nitratidesulfovibrio vulgaris (strain DSM 19637 / Miyazaki F) (Desulfovibrio vulgaris) protein is Small ribosomal subunit protein uS4.